A 36-amino-acid chain; its full sequence is Protein YnfP (36 aa).

This Escherichia coli (strain K12) protein is Protein YnfP.